The chain runs to 301 residues: D-alanine--D-alanine ligase (301 aa).

The ATP-grasp domain occupies 101–296; it reads KLMWRAAGLA…YPTLVRRVLE (196 aa). 127-182 provides a ligand contact to ATP; the sequence is EEELGLPLFVKPAREGSSIGVTKVKERGALKAAYEEAARHDPLVIAEKGVMGGEYT. 3 residues coordinate Mg(2+): aspartate 250, glutamate 263, and asparagine 265.

The protein belongs to the D-alanine--D-alanine ligase family. Mg(2+) serves as cofactor. Mn(2+) is required as a cofactor.

It is found in the cytoplasm. The catalysed reaction is 2 D-alanine + ATP = D-alanyl-D-alanine + ADP + phosphate + H(+). It participates in cell wall biogenesis; peptidoglycan biosynthesis. Functionally, cell wall formation. The protein is D-alanine--D-alanine ligase of Dechloromonas aromatica (strain RCB).